Here is a 324-residue protein sequence, read N- to C-terminus: Glyoxylate/hydroxypyruvate reductase B (324 aa).

Catalysis depends on residues arginine 237 and glutamate 266. Histidine 285 functions as the Proton donor in the catalytic mechanism.

The protein belongs to the D-isomer specific 2-hydroxyacid dehydrogenase family. GhrB subfamily. As to quaternary structure, homodimer.

It is found in the cytoplasm. It catalyses the reaction glycolate + NADP(+) = glyoxylate + NADPH + H(+). The catalysed reaction is (R)-glycerate + NAD(+) = 3-hydroxypyruvate + NADH + H(+). It carries out the reaction (R)-glycerate + NADP(+) = 3-hydroxypyruvate + NADPH + H(+). In terms of biological role, catalyzes the NADPH-dependent reduction of glyoxylate and hydroxypyruvate into glycolate and glycerate, respectively. The sequence is that of Glyoxylate/hydroxypyruvate reductase B from Salmonella schwarzengrund (strain CVM19633).